We begin with the raw amino-acid sequence, 449 residues long: Myb family transcription factor PHL6 (449 aa).

Residues 49-72 (PFIRSQSPDSPGQLWPKNSSQSTF) form a disordered region. Positions 238–298 (ANQKSRMRWT…HLQKYRLAKY (61 aa)) constitute an HTH myb-type domain. The H-T-H motif DNA-binding region spans 269-294 (PKAVKKLMNVEGLTIYHVKSHLQKYR). Residues 301-327 (EKKEEKRTDNSEEKKLALSKSEADEKK) form a disordered region. The coiled coil stretch occupies residues 334-354 (TEALRMQMEVQKQLHEQLEVQ). Residues 347–352 (LHEQLE) carry the LHEQLE motif. Residues 376-449 (RKTGRWISSS…NIAESEDPKR (74 aa)) are disordered. Polar residues predominate over residues 381-410 (WISSSSQTVLSPSDDSIPDSQNMSKTKASS).

It belongs to the MYB-CC family.

Its subcellular location is the nucleus. In Arabidopsis thaliana (Mouse-ear cress), this protein is Myb family transcription factor PHL6.